The sequence spans 373 residues: Leucine aminopeptidase 1 (373 aa).

A signal peptide spans 1–18; that stretch reads MKLLSVLALSATATSVLG. Zn(2+) contacts are provided by His176 and Asp195. N-linked (GlcNAc...) asparagine glycosylation occurs at Asn196. Glu234 and Asp261 together coordinate Zn(2+). An N-linked (GlcNAc...) asparagine glycan is attached at Asn288. Cys310 and Cys314 are disulfide-bonded. A Zn(2+)-binding site is contributed by His343. The N-linked (GlcNAc...) asparagine glycan is linked to Asn348.

This sequence belongs to the peptidase M28 family. M28E subfamily. As to quaternary structure, monomer. The cofactor is Zn(2+).

Its subcellular location is the secreted. With respect to regulation, activity is inhibited by EDTA, o-phenanthroline, bestatin and amastatin. Its function is as follows. Extracellular aminopeptidase which contributes to pathogenicity. This chain is Leucine aminopeptidase 1 (LAP1), found in Trichophyton rubrum (Athlete's foot fungus).